A 735-amino-acid polypeptide reads, in one-letter code: 1,4-alpha-glucan branching enzyme GlgB 1 (735 aa).

Aspartate 418 acts as the Nucleophile in catalysis. The active-site Proton donor is the glutamate 471.

The protein belongs to the glycosyl hydrolase 13 family. GlgB subfamily. As to quaternary structure, monomer.

It carries out the reaction Transfers a segment of a (1-&gt;4)-alpha-D-glucan chain to a primary hydroxy group in a similar glucan chain.. It participates in glycan biosynthesis; glycogen biosynthesis. In terms of biological role, catalyzes the formation of the alpha-1,6-glucosidic linkages in glycogen by scission of a 1,4-alpha-linked oligosaccharide from growing alpha-1,4-glucan chains and the subsequent attachment of the oligosaccharide to the alpha-1,6 position. This is 1,4-alpha-glucan branching enzyme GlgB 1 from Rhizobium etli (strain ATCC 51251 / DSM 11541 / JCM 21823 / NBRC 15573 / CFN 42).